A 506-amino-acid polypeptide reads, in one-letter code: Acyl-CoA-binding domain-containing protein 5 (506 aa).

An ACB domain is found at 44-133 (YETRFEAAVK…MKKIIETMPM (90 aa)). An acyl-CoA-binding positions include 55–64 (IQSLPKNGSF), 75–79 (YSFYK), Lys101, and Tyr120. A disordered region spans residues 175 to 217 (AKAVNGKAESSDSGAESEEEEAQEELKGAEQSGSDDKKMMTKS). Residues 181 to 209 (KAESSDSGAESEEEEAQEELKGAEQSGSD) are a coiled coil. Ser184, Ser185, Ser187, Ser191, Ser206, and Ser233 each carry phosphoserine. Basic and acidic residues predominate over residues 198–217 (EELKGAEQSGSDDKKMMTKS). 2 disordered regions span residues 234 to 302 (FAQD…CDSM) and 345 to 417 (AVKG…RGSR). Residues 238–257 (SDIHTDSSRSARRSEDKKPT) are compositionally biased toward basic and acidic residues. Positions 258–267 (DQSSQQTGNT) are enriched in polar residues. Ser301 carries the post-translational modification Phosphoserine. Over residues 348–360 (GKGEVKHGGEDGR) the composition is skewed to basic and acidic residues. A Phosphoserine modification is found at Ser403. Residues 406 to 416 (DGERWGSDRGS) are compositionally biased toward basic and acidic residues. Residues 426–451 (LVLIRLQEDMQNVLQRLHKLETLTAS) adopt a coiled-coil conformation. The residue at position 444 (Lys444) is an N6-acetyllysine. A helical transmembrane segment spans residues 478-498 (GALAFAIIWPFIAQWLVHLYY).

The protein belongs to the ATG37 family.

The protein resides in the peroxisome membrane. Its function is as follows. Acyl-CoA binding protein which acts as the peroxisome receptor for pexophagy but is dispensable for aggrephagy and nonselective autophagy. Binds medium- and long-chain acyl-CoA esters. In Rattus norvegicus (Rat), this protein is Acyl-CoA-binding domain-containing protein 5 (Acbd5).